Here is a 295-residue protein sequence, read N- to C-terminus: Iodotyrosine deiodinase (295 aa).

Residues 3 to 23 form a helical membrane-spanning segment; the sequence is VFSSLTPVFVAVLCVIIGFLF. A disordered region spans residues 29 to 81; sequence KESRSKQKPSDQTARPWVDEDLQDDTEISTKDNEENNEDWMDTTDEENLPHVP. The segment covering 63-75 has biased composition (acidic residues); sequence ENNEDWMDTTDEE. Residues 106–110, S134, and 134–135 contribute to the FMN site; these read RRSVR and SG. A136, E163, Y167, and K188 together coordinate 3-iodo-L-tyrosine. FMN is bound by residues 243-245 and R285; that span reads TTT.

Belongs to the nitroreductase family. FMN is required as a cofactor.

The protein resides in the membrane. The catalysed reaction is 2 iodide + L-tyrosine + 2 NADP(+) = 3,5-diiodo-L-tyrosine + 2 NADPH + H(+). It carries out the reaction iodide + L-tyrosine + NADP(+) = 3-iodo-L-tyrosine + NADPH. It catalyses the reaction 3-iodo-L-tyrosine + iodide + NADP(+) = 3,5-diiodo-L-tyrosine + NADPH + H(+). The enzyme catalyses L-tyrosine + chloride + NADP(+) = 3-chloro-L-tyrosine + NADPH. The catalysed reaction is bromide + L-tyrosine + NADP(+) = 3-bromo-L-tyrosine + NADPH. Catalyzes the dehalogenation of halotyrosines such as 3,5-diiodo-L-tyrosine. Likely to also catalyze the dehalogenation of other halotyrosines such as 3-bromo-L-tyrosine, 3-chloro-L-tyrosine and 3-iodo-L-tyrosine. This chain is Iodotyrosine deiodinase (iyd), found in Danio rerio (Zebrafish).